A 331-amino-acid polypeptide reads, in one-letter code: Isopenicillin N synthase (331 aa).

Positions 87, 91, 183, and 189 each coordinate isopenicillin N. The N-[(5S)-5-amino-5-carboxypentanoyl]-L-cysteinyl-D-valine site is built by arginine 87, tyrosine 91, serine 183, tyrosine 189, histidine 214, and aspartate 216. The Fe2OG dioxygenase domain occupies leucine 181–leucine 288. Fe(2+) is bound by residues histidine 214, aspartate 216, and histidine 270. Arginine 279 is a binding site for 2-oxoglutarate. An isopenicillin N-binding site is contributed by serine 281. Serine 281 contributes to the N-[(5S)-5-amino-5-carboxypentanoyl]-L-cysteinyl-D-valine binding site.

The protein belongs to the iron/ascorbate-dependent oxidoreductase family. Requires Fe(2+) as cofactor.

The protein resides in the cytoplasm. It is found in the cytosol. The enzyme catalyses N-[(5S)-5-amino-5-carboxypentanoyl]-L-cysteinyl-D-valine + O2 = isopenicillin N + 2 H2O. Its pathway is antibiotic biosynthesis; penicillin G biosynthesis; penicillin G from L-alpha-aminoadipate and L-cysteine and L-valine: step 2/3. In terms of biological role, isopenicillin N synthase; part of the gene cluster that mediates the biosynthesis of penicillin, the world's most important antibiotic. The first step of the pathway is performed by the trimodular NRPS acvA that produces the tripeptide N-[(5S)-5-amino-5-carboxypentanoyl]-L-cysteinyl-D-valine (LLD-ACV or ACV) via condensation of the 3 residues L-2-aminoadipate, L-cysteine and L-valine. The precursor amino acids for penicillin biosynthesis are withdrawn from the vacuolar amino acid pool by the MFS-type transporter penV. Each of the constituent amino acids of the tripeptide acv are activated as aminoacyl-adenylates with peptide bonds formed through the participation of amino acid thioester intermediates. The tripeptide ACV is then cyclized to form isopenicillin N (IPN) by the isopenicillin N synthase ipnA that forms the beta-lactam nucleus. Finally, the alpha-aminoadipyl side chain is exchanged for phenylacetic acid by the isopenicillin N acyltransferase aatA to yield penicillin. This step occurs in the peroxisomal matrix and the penM and paaT transporters are involved in the isopenicillin N and phenylacetic acid import into the peroxisome, respectively. This is Isopenicillin N synthase from Penicillium rubens (strain ATCC 28089 / DSM 1075 / NRRL 1951 / Wisconsin 54-1255) (Penicillium chrysogenum).